The sequence spans 254 residues: Probable protein S-acyltransferase 15 (254 aa).

Transmembrane regions (helical) follow at residues 1-21 and 28-48; these read MGFV…GLQS and ALLF…CVLV. In terms of domain architecture, DHHC spans 75–125; it reads RKCDKCFAYKPLRTHHCRVCRRCVLKMDHHCLWINNCVGYANYKAFFILVF. C105 serves as the catalytic S-palmitoyl cysteine intermediate. A run of 2 helical transmembrane segments spans residues 119–139 and 164–184; these read AFFI…VLLV and IFMI…IYLI.

This sequence belongs to the DHHC palmitoyltransferase family.

It is found in the endoplasmic reticulum membrane. The protein resides in the cytoplasmic vesicle membrane. It catalyses the reaction L-cysteinyl-[protein] + hexadecanoyl-CoA = S-hexadecanoyl-L-cysteinyl-[protein] + CoA. Its function is as follows. Palmitoyl acyltransferase. This chain is Probable protein S-acyltransferase 15 (PAT15), found in Arabidopsis thaliana (Mouse-ear cress).